Reading from the N-terminus, the 1173-residue chain is MSRGSIEIPLRDTDEVIELDFDQLPEGDEVISILKQEHTQLHIWIALALEYYKQGKTEEFVKLLEAARIDGNLDYRDHEKDQMTCLDTLAAYYVQQARKEKNKDNKKDLITQATLLYTMADKIIMYDQNHLLGRACFCLLEGDKMDQADAQFHFVLNQSPNNIPALLGKACISFNKKDYRGALAYYKKALRTNPGCPAEVRLGMGHCFVKLNKLEKARLAFSRALELNSKCVGALVGLAVLELNNKEADSIKNGVQLLSRAYTIDPSNPMVLNHLANHFFFKKDYSKVQHLALHAFHNTEVEAMQAESCYQLARSFHVQEDYDQAFQYYYQATQFASSSFVLPFFGLGQMYIYRGDKENASQCFEKVLKAYPNNYETMKILGSLYAASEDQEKRDIAKGHLKKVTEQYPDDVEAWIELAQILEQTDIQGALSAYGTATRILQEKVQADVPPEILNNVGALHFRLGNLGEAKKYFLASLDRAKAEAEHDEHYYNAISVTTSYNLARLYEAMCEFHEAEKLYKNILREHPNYVDCYLRLGAMARDKGNFYEASDWFKEALQINQDHPDAWSLIGNLHLAKQEWGPGQKKFERILKQPSTQSDTYSMLALGNVWLQTLHQPTRDREKEKRHQDRALAIYKQVLRNDAKNLYAANGIGAVLAHKGYFREARDVFAQVREATADISDVWLNLAHIYVEQKQYISAVQMYENCLRKFYKHQNTEVVLYLARALFKCGKLQECKQTLLKARHVAPSDTVLMFNVALVLQRLATSVLKDEKSNLKEVLNAVKELELAHRYFSYLSKVGDKMRFDLALAATEARQCSDLLSQAQYHVARARKQDEEERELRAKQEQEKELLRQKLLKEQEEKRLREKEEQKKLLEQRAQYVEKTKNILMFTGETEATKEKKRGGGGGRRSKKGGEFDEFVNDDTDDDLPISKKKKRRKGSGSEQEGEDEEGGERKKKKRRRHPKGEEGSDDDETENGPKPKKRRPPKAEKKKAPKPERLPPSMKGKIKSKAIISSSDDSSDEDKLKIADEGHPRNSNSNSDSDEDEQRKKCASSESDSDENQNKSGSEAGSPRRPRRQRSDQDSDSDQPSRKRRPSGSEQSDNESVQSGRSHSGVSENDSRPASPSAESDHESERGSDNEGSGQGSGNESEPEGSNNEASDRGSEHGSDDSD.

16 TPR repeats span residues 41–75 (LHIWIALALEYYKQGKTEEFVKLLEAARIDGNLDY), 129–162 (NHLLGRACFCLLEGDKMDQADAQFHFVLNQSPNN), 163–196 (IPALLGKACISFNKKDYRGALAYYKKALRTNPGC), 198–231 (AEVRLGMGHCFVKLNKLEKARLAFSRALELNSKC), 235–268 (LVGLAVLELNNKEADSIKNGVQLLSRAYTIDPSN), 306–339 (AESCYQLARSFHVQEDYDQAFQYYYQATQFASSS), 341–374 (VLPFFGLGQMYIYRGDKENASQCFEKVLKAYPNN), 412–444 (VEAWIELAQILEQTDIQGALSAYGTATRILQEK), 451–484 (PEILNNVGALHFRLGNLGEAKKYFLASLDRAKAE), 497–530 (VTTSYNLARLYEAMCEFHEAEKLYKNILREHPNY), 531–564 (VDCYLRLGAMARDKGNFYEASDWFKEALQINQDH), 566–598 (DAWSLIGNLHLAKQEWGPGQKKFERILKQPSTQ), 613–646 (QTLHQPTRDREKEKRHQDRALAIYKQVLRNDAKN), 647–680 (LYAANGIGAVLAHKGYFREARDVFAQVREATADI), 681–714 (SDVWLNLAHIYVEQKQYISAVQMYENCLRKFYKH), and 717–750 (TEVVLYLARALFKCGKLQECKQTLLKARHVAPSD). The interval 892-1173 (TGETEATKEK…GSEHGSDDSD (282 aa)) is disordered. Over residues 900–912 (EKKRGGGGGRRSK) the composition is skewed to basic residues. A compositionally biased stretch (acidic residues) spans 917-929 (FDEFVNDDTDDDL). A Phosphothreonine modification is found at threonine 925. 3 positions are modified to phosphoserine: serine 932, serine 941, and serine 943. Positions 955–964 (RKKKKRRRHP) are enriched in basic residues. Serine 970 carries the post-translational modification Phosphoserine. The segment covering 980–994 (KPKKRRPPKAEKKKA) has biased composition (basic residues). Phosphoserine is present on residues serine 1020 and serine 1021. The span at 1023 to 1034 (EDKLKIADEGHP) shows a compositional bias: basic and acidic residues. Phosphoserine occurs at positions 1039, 1041, 1043, 1081, 1085, 1087, 1097, and 1102. A compositionally biased stretch (polar residues) spans 1098–1128 (GSEQSDNESVQSGRSHSGVSENDSRPASPSA). A compositionally biased stretch (basic and acidic residues) spans 1129 to 1139 (ESDHESERGSD). Over residues 1148 to 1159 (GNESEPEGSNNE) the composition is skewed to low complexity. Over residues 1160–1173 (ASDRGSEHGSDDSD) the composition is skewed to basic and acidic residues.

As to quaternary structure, component of the PAF1 complex, which consists of CDC73, PAF1, LEO1, CTR9, RTF1 and SKIC8. The PAF1 complex interacts with PHF5A. Interacts with KMT2A/MLL1. Interacts with STAT3. Interacts with SETD5. Interacts with ERCC6. (Microbial infection) The PAF1 complex interacts with Zika virus French Polynesia 10087PF/2013 non-structural protein 5/NS5. The interaction with viral NS5 proteins may reduce the antiviral immune response by inhibiting the recruitment of the PAF1 complex to interferon-stimulated genes, thus preventing their transcription. In terms of assembly, (Microbial infection) The PAF1 complex interacts with Dengue virus DENV2 16681 non-structural protein 5/NS5. The PAF1 complex interacts with Dengue virus DENV4 Dominica/814669/1981 non-structural protein 5/NS5. The interaction with viral NS5 proteins may reduce the antiviral immune response by inhibiting the recruitment of the PAF1 complex to interferon-stimulated genes, thus preventing their transcription. As to expression, widely expressed.

The protein resides in the nucleus speckle. Its function is as follows. Component of the PAF1 complex (PAF1C) which has multiple functions during transcription by RNA polymerase II and is implicated in regulation of development and maintenance of embryonic stem cell pluripotency. PAF1C associates with RNA polymerase II through interaction with POLR2A CTD non-phosphorylated and 'Ser-2'- and 'Ser-5'-phosphorylated forms and is involved in transcriptional elongation, acting both independently and synergistically with TCEA1 and in cooperation with the DSIF complex and HTATSF1. PAF1C is required for transcription of Hox and Wnt target genes. PAF1C is involved in hematopoiesis and stimulates transcriptional activity of KMT2A/MLL1; it promotes leukemogenesis through association with KMT2A/MLL1-rearranged oncoproteins, such as KMT2A/MLL1-MLLT3/AF9 and KMT2A/MLL1-MLLT1/ENL. PAF1C is involved in histone modifications such as ubiquitination of histone H2B and methylation on histone H3 'Lys-4' (H3K4me3). PAF1C recruits the RNF20/40 E3 ubiquitin-protein ligase complex and the E2 enzyme UBE2A or UBE2B to chromatin which mediate monoubiquitination of 'Lys-120' of histone H2B (H2BK120ub1); UB2A/B-mediated H2B ubiquitination is proposed to be coupled to transcription. PAF1C is involved in mRNA 3' end formation probably through association with cleavage and poly(A) factors. In case of infection by influenza A strain H3N2, PAF1C associates with viral NS1 protein, thereby regulating gene transcription. Required for mono- and trimethylation on histone H3 'Lys-4' (H3K4me3) and dimethylation on histone H3 'Lys-79' (H3K4me3). Required for Hox gene transcription. Required for the trimethylation of histone H3 'Lys-4' (H3K4me3) on genes involved in stem cell pluripotency; this function is synergistic with CXXC1 indicative for an involvement of the SET1 complex. Involved in transcriptional regulation of IL6-responsive genes and in JAK-STAT pathway; may regulate DNA-association of STAT3. This Homo sapiens (Human) protein is RNA polymerase-associated protein CTR9 homolog (CTR9).